The sequence spans 98 residues: NADH-ubiquinone oxidoreductase chain 4L (98 aa).

The next 3 membrane-spanning stretches (helical) occupy residues Met1–Val21, His25–Thr45, and Ser57–Val79.

This sequence belongs to the complex I subunit 4L family. In terms of assembly, core subunit of respiratory chain NADH dehydrogenase (Complex I) which is composed of 45 different subunits.

The protein localises to the mitochondrion inner membrane. It catalyses the reaction a ubiquinone + NADH + 5 H(+)(in) = a ubiquinol + NAD(+) + 4 H(+)(out). Core subunit of the mitochondrial membrane respiratory chain NADH dehydrogenase (Complex I) which catalyzes electron transfer from NADH through the respiratory chain, using ubiquinone as an electron acceptor. Part of the enzyme membrane arm which is embedded in the lipid bilayer and involved in proton translocation. The protein is NADH-ubiquinone oxidoreductase chain 4L (MT-ND4L) of Dasyurus hallucatus (Northern quoll).